The primary structure comprises 76 residues: Dolichyl-diphosphooligosaccharide--protein glycosyltransferase subunit OST5 (76 aa).

The next 2 helical transmembrane spans lie at 14-34 and 54-74; these read FYPV…ATFI and ALIA…AGGI.

It belongs to the OST5 family. Component of the oligosaccharyltransferase (OST) complex.

It localises to the membrane. Functionally, subunit of the oligosaccharyl transferase (OST) complex that catalyzes the initial transfer of a defined glycan (Glc(3)Man(9)GlcNAc(2) in eukaryotes) from the lipid carrier dolichol-pyrophosphate to an asparagine residue within an Asn-X-Ser/Thr consensus motif in nascent polypeptide chains, the first step in protein N-glycosylation. N-glycosylation occurs cotranslationally and the complex associates with the Sec61 complex at the channel-forming translocon complex that mediates protein translocation across the endoplasmic reticulum (ER). All subunits are required for a maximal enzyme activity. This chain is Dolichyl-diphosphooligosaccharide--protein glycosyltransferase subunit OST5, found in Dictyostelium discoideum (Social amoeba).